The chain runs to 710 residues: Adenylosuccinate synthetase (710 aa).

2 disordered regions span residues 1–57 (MPVR…NHAK) and 82–112 (MDDE…SAQC). The segment covering 11-25 (NNSSSGVSNALSSSS) has biased composition (low complexity). Residues 32-43 (SPSSRENSTPLS) are compositionally biased toward polar residues. GTP is bound by residues 180–186 (GDEGKGK) and 210–212 (GHT). The Proton acceptor role is filled by D181. 2 residues coordinate Mg(2+): D181 and G210. IMP is bound by residues 181–184 (DEGK), 208–211 (NAGH), T295, K309, Q421, T437, and K567. The active-site Proton donor is H211. A substrate-binding site is contributed by 563 to 569 (AVTKKPR). Residues R569 and 697 to 699 (GNG) contribute to the GTP site.

It belongs to the adenylosuccinate synthetase family. As to quaternary structure, homodimer. Mg(2+) is required as a cofactor.

The protein localises to the cytoplasm. The catalysed reaction is IMP + L-aspartate + GTP = N(6)-(1,2-dicarboxyethyl)-AMP + GDP + phosphate + 2 H(+). Its pathway is purine metabolism; AMP biosynthesis via de novo pathway; AMP from IMP: step 1/2. Its function is as follows. Plays an important role in the salvage pathway for purine nucleotide biosynthesis. Catalyzes the first committed step in the biosynthesis of AMP from IMP. This is Adenylosuccinate synthetase from Leishmania braziliensis.